A 506-amino-acid polypeptide reads, in one-letter code: Phenylacetaldehyde synthase (506 aa).

Positions 101, 202, and 317 each coordinate L-phenylalanine. Position 318 is an N6-(pyridoxal phosphate)lysine (K318).

It belongs to the group II decarboxylase family. Homotetramer. It depends on pyridoxal 5'-phosphate as a cofactor. Highly expressed in corolla limbs and at lower levels in corolla tubes and ovaries.

The catalysed reaction is L-phenylalanine + O2 + H2O + H(+) = 2-phenylacetaldehyde + H2O2 + NH4(+) + CO2. Bifunctional enzyme that catalyzes the decarboxylation of L-phenylalanine to 2-phenylethylamine, which is then oxidized to form 2-phenylacetaldehyde, a constituent of floral scent. 2-phenylacetaldehyde is a precursor of 2-phenylethanol, another constituent of floral scent. In Petunia hybrida (Petunia), this protein is Phenylacetaldehyde synthase.